We begin with the raw amino-acid sequence, 185 residues long: Elongation factor P (185 aa).

It belongs to the elongation factor P family.

It is found in the cytoplasm. The protein operates within protein biosynthesis; polypeptide chain elongation. Involved in peptide bond synthesis. Stimulates efficient translation and peptide-bond synthesis on native or reconstituted 70S ribosomes in vitro. Probably functions indirectly by altering the affinity of the ribosome for aminoacyl-tRNA, thus increasing their reactivity as acceptors for peptidyl transferase. The protein is Elongation factor P of Paraburkholderia xenovorans (strain LB400).